The sequence spans 795 residues: Phenylalanine--tRNA ligase beta subunit (795 aa).

The region spanning 39–148 (AAKFNGVLVG…SDAPVGTDLR (110 aa)) is the tRNA-binding domain. Residues 401–476 (PKVTEVRLRR…RVYGYNSIPN (76 aa)) enclose the B5 domain. Mg(2+) is bound by residues Asp-454, Asp-460, Glu-463, and Glu-464. The region spanning 701–794 (SKFPSNRRDI…LAEQFNASLR (94 aa)) is the FDX-ACB domain.

It belongs to the phenylalanyl-tRNA synthetase beta subunit family. Type 1 subfamily. As to quaternary structure, tetramer of two alpha and two beta subunits. It depends on Mg(2+) as a cofactor.

The protein resides in the cytoplasm. The enzyme catalyses tRNA(Phe) + L-phenylalanine + ATP = L-phenylalanyl-tRNA(Phe) + AMP + diphosphate + H(+). The polypeptide is Phenylalanine--tRNA ligase beta subunit (Pseudoalteromonas translucida (strain TAC 125)).